Reading from the N-terminus, the 272-residue chain is MNEAYSPAAPRPMGSTSPSTMKMFMCFLSVFMVVQTIGTVLFCLYLHMKMDKMEEVLSLNEDYIFLRKVQKCQTGEDQKSTLLDCEKVLKGFQDLQCKDRTASEELPKFEMHRGHEHPHLKSRNETSVAEEKRQPIATHLAGVKSNTTVRVLKWMTTSYAPTSSLISYHEGKLKVEKAGLYYIYSQVSFCTKAAASAPFTLYIYLYLPMEEDRLLMKGLDTHSTSTALCELQSIREGGVFELRQGDMVFVNVTDSTAVNVNPGNTYFGMFKL.

Residues 1-23 are Cytoplasmic-facing; it reads MNEAYSPAAPRPMGSTSPSTMKM. The chain crosses the membrane as a helical; Signal-anchor for type II membrane protein span at residues 24–44; that stretch reads FMCFLSVFMVVQTIGTVLFCL. At 45 to 272 the chain is on the extracellular side; the sequence is YLHMKMDKME…GNTYFGMFKL (228 aa). 2 N-linked (GlcNAc...) asparagine glycosylation sites follow: asparagine 124 and asparagine 146. Residues 136 to 272 form the THD domain; the sequence is IATHLAGVKS…GNTYFGMFKL (137 aa). Residues cysteine 190 and cysteine 229 are joined by a disulfide bond. Asparagine 251 is a glycosylation site (N-linked (GlcNAc...) asparagine).

It belongs to the tumor necrosis factor family. Homotrimer. Interacts with CD28. CD40 ligand, soluble form: Exists as either a monomer or a homotrimer. Forms a ternary complex between CD40 and integrins for CD40-CD40LG signaling. The soluble form derives from the membrane form by proteolytic processing.

Its subcellular location is the cell membrane. It localises to the cell surface. The protein localises to the secreted. Functionally, cytokine that acts as a ligand to CD40/TNFRSF5. Costimulates T-cell proliferation and cytokine production. Induces the activation of NF-kappa-B. Mediates B-cell proliferation in the absence of co-stimulus as well as IgE production in the presence of IL4. Involved in immunoglobulin class switching. Its function is as follows. Acts as a ligand for integrins, specifically ITGA5:ITGB1 and ITGAV:ITGB3; both integrins and the CD40 receptor are required for activation of CD40-CD40LG signaling, which have cell-type dependent effects, such as B-cell activation, NF-kappa-B signaling and anti-apoptotic signaling. In Gallus gallus (Chicken), this protein is CD40 ligand (CD40LG).